We begin with the raw amino-acid sequence, 868 residues long: Leucine--tRNA ligase (868 aa).

The short motif at 42-52 (PYPSGKLHMGH) is the 'HIGH' region element. The short motif at 627–631 (KMSKS) is the 'KMSKS' region element. Position 630 (Lys630) interacts with ATP.

Belongs to the class-I aminoacyl-tRNA synthetase family.

The protein localises to the cytoplasm. It carries out the reaction tRNA(Leu) + L-leucine + ATP = L-leucyl-tRNA(Leu) + AMP + diphosphate. This Pseudomonas syringae pv. tomato (strain ATCC BAA-871 / DC3000) protein is Leucine--tRNA ligase.